An 86-amino-acid polypeptide reads, in one-letter code: MAMTVKKDNNEVRIQWRVADIKIPTSEIKNITQDQDIHAVPKLDSKDVSRIGSTFGKTNRVIIDTEDHEYIIYTQNDQKVYNELTK.

The protein belongs to the UPF0457 family.

In Staphylococcus aureus (strain USA300), this protein is UPF0457 protein SAUSA300_2132.